The chain runs to 653 residues: Macrolide export ATP-binding/permease protein MacB (653 aa).

Residues 6-244 (IELQGVSRSY…PPLLPCSAHP (239 aa)) form the ABC transporter domain. 42 to 49 (GSSGSGKS) provides a ligand contact to ATP. Transmembrane regions (helical) follow at residues 275–295 (LLTMAGIVFGIAAVVTVVGLG), 525–545 (FSVLITMVAMIALFIGSLGVM), 576–596 (FLIEAVLVCLTGGLLGVLLAL), and 616–636 (WPAVSGAFLCACAIGMVFGYW).

This sequence belongs to the ABC transporter superfamily. Macrolide exporter (TC 3.A.1.122) family. Homodimer. Part of the tripartite efflux system MacAB-TolC, which is composed of an inner membrane transporter, MacB, a periplasmic membrane fusion protein, MacA, and an outer membrane component, TolC. The complex forms a large protein conduit and can translocate molecules across both the inner and outer membranes. Interacts with MacA.

The protein localises to the cell inner membrane. Part of the tripartite efflux system MacAB-TolC. MacB is a non-canonical ABC transporter that contains transmembrane domains (TMD), which form a pore in the inner membrane, and an ATP-binding domain (NBD), which is responsible for energy generation. Confers resistance against macrolides. This is Macrolide export ATP-binding/permease protein MacB from Sodalis glossinidius (strain morsitans).